A 338-amino-acid polypeptide reads, in one-letter code: Tagatose 1,6-diphosphate aldolase (338 aa).

This sequence belongs to the aldolase LacD family.

The enzyme catalyses D-tagatofuranose 1,6-bisphosphate = D-glyceraldehyde 3-phosphate + dihydroxyacetone phosphate. It participates in carbohydrate metabolism; D-tagatose 6-phosphate degradation; D-glyceraldehyde 3-phosphate and glycerone phosphate from D-tagatose 6-phosphate: step 2/2. This is Tagatose 1,6-diphosphate aldolase from Listeria monocytogenes serotype 4b (strain CLIP80459).